A 526-amino-acid chain; its full sequence is Chaperonin GroEL, chloroplastic (526 aa).

ATP contacts are provided by residues 29 to 32 (TLGP), 86 to 90 (DGTTT), Gly-412, 476 to 478 (DAA), and Asp-492.

The protein belongs to the chaperonin (HSP60) family. In terms of assembly, forms a cylinder of 14 subunits composed of two heptameric rings stacked back-to-back. Interacts with the co-chaperonin GroES.

The protein resides in the plastid. It localises to the chloroplast. It catalyses the reaction ATP + H2O + a folded polypeptide = ADP + phosphate + an unfolded polypeptide.. Functionally, together with its co-chaperonin GroES, plays an essential role in assisting protein folding. The GroEL-GroES system forms a nano-cage that allows encapsulation of the non-native substrate proteins and provides a physical environment optimized to promote and accelerate protein folding. This Cyanidioschyzon merolae (strain NIES-3377 / 10D) (Unicellular red alga) protein is Chaperonin GroEL, chloroplastic.